Reading from the N-terminus, the 92-residue chain is Neurophysin 2 (92 aa).

7 disulfides stabilise this stretch: C7-C51, C10-C24, C18-C41, C25-C31, C58-C70, C64-C82, and C71-C76.

Belongs to the vasopressin/oxytocin family.

It localises to the secreted. Its function is as follows. Neurophysin 2 specifically binds the midbrain peptide hormone vasopressin. In Equus caballus (Horse), this protein is Neurophysin 2 (AVP).